The primary structure comprises 250 residues: HTH-type transcriptional regulator SarS (250 aa).

DNA-binding regions (H-T-H motif) lie at residues 53-76 and 177-200; these read FKKIVSDLCYKQSDLVQHIKVLVK and LKDLIETIHHKYPQTVRALNNLKK.

This sequence belongs to the SarA family.

It is found in the cytoplasm. Transcriptional regulator that controls expression of some virulence factors in a cell density-dependent manner. This is HTH-type transcriptional regulator SarS (sarS) from Staphylococcus aureus (strain MRSA252).